A 375-amino-acid chain; its full sequence is tRNA-specific 2-thiouridylase MnmA (375 aa).

Residues 12 to 19 (GMSGGVDS) and M38 contribute to the ATP site. Positions 98–100 (NPD) are interaction with target base in tRNA. C103 functions as the Nucleophile in the catalytic mechanism. A disulfide bond links C103 and C200. G127 contributes to the ATP binding site. Positions 150 to 152 (KDQ) are interaction with tRNA. The active-site Cysteine persulfide intermediate is C200. The interval 312 to 313 (RY) is interaction with tRNA.

It belongs to the MnmA/TRMU family.

Its subcellular location is the cytoplasm. It catalyses the reaction S-sulfanyl-L-cysteinyl-[protein] + uridine(34) in tRNA + AH2 + ATP = 2-thiouridine(34) in tRNA + L-cysteinyl-[protein] + A + AMP + diphosphate + H(+). Functionally, catalyzes the 2-thiolation of uridine at the wobble position (U34) of tRNA, leading to the formation of s(2)U34. The sequence is that of tRNA-specific 2-thiouridylase MnmA from Lactobacillus gasseri (strain ATCC 33323 / DSM 20243 / BCRC 14619 / CIP 102991 / JCM 1131 / KCTC 3163 / NCIMB 11718 / NCTC 13722 / AM63).